A 571-amino-acid chain; its full sequence is Proline--tRNA ligase (571 aa).

It belongs to the class-II aminoacyl-tRNA synthetase family. ProS type 1 subfamily. In terms of assembly, homodimer.

The protein resides in the cytoplasm. It carries out the reaction tRNA(Pro) + L-proline + ATP = L-prolyl-tRNA(Pro) + AMP + diphosphate. Catalyzes the attachment of proline to tRNA(Pro) in a two-step reaction: proline is first activated by ATP to form Pro-AMP and then transferred to the acceptor end of tRNA(Pro). As ProRS can inadvertently accommodate and process non-cognate amino acids such as alanine and cysteine, to avoid such errors it has two additional distinct editing activities against alanine. One activity is designated as 'pretransfer' editing and involves the tRNA(Pro)-independent hydrolysis of activated Ala-AMP. The other activity is designated 'posttransfer' editing and involves deacylation of mischarged Ala-tRNA(Pro). The misacylated Cys-tRNA(Pro) is not edited by ProRS. The polypeptide is Proline--tRNA ligase (Pasteurella multocida (strain Pm70)).